A 467-amino-acid chain; its full sequence is Zinc finger protein mex-6 (467 aa).

2 stretches are compositionally biased toward low complexity: residues 1–22 (MTAT…ATAQ) and 179–195 (STTR…LPTS). Disordered regions lie at residues 1–35 (MTAT…QQHP) and 163–209 (TNPQ…NRNS). A Phosphothreonine modification is found at Thr-190. Basic and acidic residues predominate over residues 196–207 (REYETVQRDRNR). 2 consecutive C3H1-type zinc fingers follow at residues 273–302 (NFKT…HGLK) and 317–347 (KYKT…HPSD). A disordered region spans residues 425 to 451 (INENDLPPHLRRIRRGNPPVTRSRPSF). At Ser-457 the chain carries Phosphoserine.

In terms of assembly, interacts (probably when phosphorylated on Thr-190) with plk-1 (via POLO box domain) and plk-2 (via POLO box domain). Post-translationally, phosphorylation on Ser-457 by par-1 promotes localization of the protein to the anterior cytoplasm of the zygote.

It localises to the cytoplasm. Functionally, functions with mex-5 to affect embryonic viability, establish soma germline asymmetry in embryos and establish plk-1, pie-1, mex-1, and pos-1 asymmetry in embryos. Also affects formation of intestinal cells. The sequence is that of Zinc finger protein mex-6 (mex-6) from Caenorhabditis elegans.